Here is a 148-residue protein sequence, read N- to C-terminus: Large ribosomal subunit protein bL9 (148 aa).

It belongs to the bacterial ribosomal protein bL9 family.

Its function is as follows. Binds to the 23S rRNA. The polypeptide is Large ribosomal subunit protein bL9 (Heliobacterium modesticaldum (strain ATCC 51547 / Ice1)).